Consider the following 691-residue polypeptide: MARAFPLERVRNIGIAAHIDAGKTTTTERILFYSGVVHKIGEVHDGAAVTDWMAQERERGITITAAAISTSWKDHRVNIIDTPGHVDFTIEVERSMRVLDGVIAVFCAVGGVQPQSETVWRQADRYSVPRMVFVNKMDRTGADFLKVHGQIQDRLKANAVPIQLPIGAEGELSGIIDLVENKAHIYKDDLGQDIEITDVPEAMKDQVEEWRAFLMEKVAETDEALIEKFLDTGELSNDELKQGIRTGVVKHGLVPVLCGSAFKNKGVQLVLDAVVDYLPAPIDVPPIQGILPDGTEAVRPSDDKAPFSALAFKVMADPYGKLTFVRMYSGVLEKGSYVMNSTKGIKERISRLVVLKADDREEVDQLQAGDLGAVLGLKNTTTGDTLCSADEPIVLETLFVPEPVISVAVEPKTKGDMEKLSKALVSLAEEDPTFRVRTDQETGQTVIAGMGELHLEILVDRMMREFKVEANIGAPQVSYRETIRGSSKGEGKFSRQTGGKGQYGHVVIEMEPGEPESGFVFVNKIVGGIVPKEFIKPSEQGMKETCESGVIAGFPLIDVKVSMVDGSYHDVDSSEMAFKIAGSMAFKDAVRKCNPVLLEPMMKVEVEVPEDFLGSVIGDLSSRRGQVEGQAIDDGTSKVSAKVPLAEMFGYATELRSMTQGRGIFSMEFSHYEDVPRNVAEAIISKNQGNS.

The tr-type G domain maps to 8–282; it reads ERVRNIGIAA…AVVDYLPAPI (275 aa). Residues 17-24, 81-85, and 135-138 contribute to the GTP site; these read AHIDAGKT, DTPGH, and NKMD.

The protein belongs to the TRAFAC class translation factor GTPase superfamily. Classic translation factor GTPase family. EF-G/EF-2 subfamily.

The protein resides in the cytoplasm. Its function is as follows. Catalyzes the GTP-dependent ribosomal translocation step during translation elongation. During this step, the ribosome changes from the pre-translocational (PRE) to the post-translocational (POST) state as the newly formed A-site-bound peptidyl-tRNA and P-site-bound deacylated tRNA move to the P and E sites, respectively. Catalyzes the coordinated movement of the two tRNA molecules, the mRNA and conformational changes in the ribosome. The chain is Elongation factor G from Synechococcus sp. (strain CC9902).